The following is a 177-amino-acid chain: Ubiquinol-cytochrome c reductase iron-sulfur subunit (177 aa).

A helical transmembrane segment spans residues 18-38; it reads IVLTASSVAAVGAACAFWPII. One can recognise a Rieske domain in the interval 88 to 175; it reads ARAVKMSELI…YIFISDTKIR (88 aa). Residues C120, H122, C139, and H142 each coordinate [2Fe-2S] cluster. C125 and C141 form a disulfide bridge.

The protein belongs to the Rieske iron-sulfur protein family. The main subunits of complex b-c1 are: cytochrome b, cytochrome c1 and the Rieske protein. It depends on [2Fe-2S] cluster as a cofactor.

The protein localises to the cell membrane. The enzyme catalyses a quinol + 2 Fe(III)-[cytochrome c](out) = a quinone + 2 Fe(II)-[cytochrome c](out) + 2 H(+)(out). Its function is as follows. Component of the ubiquinol-cytochrome c reductase complex (complex III or cytochrome b-c1 complex), which is a respiratory chain that generates an electrochemical potential coupled to ATP synthesis. This Rickettsia typhi (strain ATCC VR-144 / Wilmington) protein is Ubiquinol-cytochrome c reductase iron-sulfur subunit (petA).